Reading from the N-terminus, the 344-residue chain is GLIPR1-like protein 2 (344 aa).

The region spanning 58 to 192 is the SCP domain; sequence VNLHNELRGD…IHAAIFICNY (135 aa). The helical transmembrane segment at 254-274 threads the bilayer; it reads TFILLLRILCFILCVITVLIV. Composition is skewed to acidic residues over residues 292–304 and 312–334; these read EESE…EEKE and EMEM…EEET. Residues 292–344 are disordered; the sequence is EESEAGNEEEEKEEEKKEKEEMEMEIMEMEEEKEEREEEEEETQKEKMEEEEK. The segment covering 335–344 has biased composition (basic and acidic residues); sequence QKEKMEEEEK.

Belongs to the CRISP family. Highly expressed in testis. Detected in prostate, kidney, bladder, lung and bone marrow.

It localises to the membrane. This chain is GLIPR1-like protein 2 (GLIPR1L2), found in Homo sapiens (Human).